A 270-amino-acid polypeptide reads, in one-letter code: MPGKHQQFQDPEVGCCGKYFLFGFNIVFWVLGALFLAIGLWAWGEKGVLSNISALTDLGGLDPVWLFVVVGGVMSVLGFAGCIGALRENTFLLKFFSVFLGLIFFLELAAGILAFVFKDWIRDQLNLFINNNVKAYRDDLDLQNLIDFAQEYWSCCGARGPNDWNLNIYFNCTDLNPSRERCGVPFSCCVRDPAEDVLNTQCGYDIRLKLELEQEGSIYTKGCVGQFEKWLQDNLIVVAGVLVGIALLQIFGLCLAQNLVSDIKAVKANW.

Topologically, residues 1–19 (MPGKHQQFQDPEVGCCGKY) are cytoplasmic. A helical transmembrane segment spans residues 20 to 40 (FLFGFNIVFWVLGALFLAIGL). Topologically, residues 41 to 63 (WAWGEKGVLSNISALTDLGGLDP) are extracellular. N51 carries N-linked (GlcNAc...) asparagine glycosylation. The chain crosses the membrane as a helical span at residues 64 to 84 (VWLFVVVGGVMSVLGFAGCIG). Topologically, residues 85 to 94 (ALRENTFLLK) are cytoplasmic. Residues 95 to 115 (FFSVFLGLIFFLELAAGILAF) form a helical membrane-spanning segment. Over 116 to 234 (VFKDWIRDQL…GQFEKWLQDN (119 aa)) the chain is Extracellular. Intrachain disulfides connect C155-C223, C156-C188, C172-C182, and C189-C202. An N-linked (GlcNAc...) asparagine glycan is attached at N171. The helical transmembrane segment at 235 to 255 (LIVVAGVLVGIALLQIFGLCL) threads the bilayer. Over 256-270 (AQNLVSDIKAVKANW) the chain is Cytoplasmic.

Belongs to the tetraspanin (TM4SF) family. As to quaternary structure, interacts with ADAM10; the interaction influences ADAM10 substrate specificity, endocytosis and turnover.

The protein resides in the cell membrane. Functionally, part of TspanC8 subgroup, composed of 6 members that interact with the transmembrane metalloprotease ADAM10. This interaction is required for ADAM10 exit from the endoplasmic reticulum and for enzymatic maturation and trafficking to the cell surface as well as substrate specificity. Different TspanC8/ADAM10 complexes have distinct substrates. Seems to regulate VE-cadherin expression in endothelial cells probably through interaction with ADAM10, promoting leukocyte transmigration. This chain is Tetraspanin-17 (Tspan17), found in Mus musculus (Mouse).